The primary structure comprises 420 residues: Tyrosine--tRNA ligase (420 aa).

Tyr-36 lines the L-tyrosine pocket. A 'HIGH' region motif is present at residues 41–50; it reads PTADSLHIGH. Positions 170 and 174 each coordinate L-tyrosine. Residues 231 to 235 carry the 'KMSKS' region motif; sequence KFGKS. Position 234 (Lys-234) interacts with ATP. Residues 353–420 enclose the S4 RNA-binding domain; sequence TNIVEVLIET…KKKYFMVNYQ (68 aa).

It belongs to the class-I aminoacyl-tRNA synthetase family. TyrS type 1 subfamily. As to quaternary structure, homodimer.

The protein resides in the cytoplasm. It carries out the reaction tRNA(Tyr) + L-tyrosine + ATP = L-tyrosyl-tRNA(Tyr) + AMP + diphosphate + H(+). Its function is as follows. Catalyzes the attachment of tyrosine to tRNA(Tyr) in a two-step reaction: tyrosine is first activated by ATP to form Tyr-AMP and then transferred to the acceptor end of tRNA(Tyr). The protein is Tyrosine--tRNA ligase of Staphylococcus aureus (strain COL).